We begin with the raw amino-acid sequence, 435 residues long: Serine--tRNA ligase (435 aa).

L-serine is bound at residue 233–235 (TAE). ATP is bound at residue 264 to 266 (RAE). Position 287 (glutamate 287) interacts with L-serine. 351–354 (EISS) is an ATP binding site. Serine 386 lines the L-serine pocket.

This sequence belongs to the class-II aminoacyl-tRNA synthetase family. Type-1 seryl-tRNA synthetase subfamily. In terms of assembly, homodimer. The tRNA molecule binds across the dimer.

The protein resides in the cytoplasm. It carries out the reaction tRNA(Ser) + L-serine + ATP = L-seryl-tRNA(Ser) + AMP + diphosphate + H(+). The enzyme catalyses tRNA(Sec) + L-serine + ATP = L-seryl-tRNA(Sec) + AMP + diphosphate + H(+). The protein operates within aminoacyl-tRNA biosynthesis; selenocysteinyl-tRNA(Sec) biosynthesis; L-seryl-tRNA(Sec) from L-serine and tRNA(Sec): step 1/1. Functionally, catalyzes the attachment of serine to tRNA(Ser). Is also able to aminoacylate tRNA(Sec) with serine, to form the misacylated tRNA L-seryl-tRNA(Sec), which will be further converted into selenocysteinyl-tRNA(Sec). The chain is Serine--tRNA ligase from Anaeromyxobacter dehalogenans (strain 2CP-C).